A 79-amino-acid polypeptide reads, in one-letter code: UPF0154 protein SUB0399 (79 aa).

A helical membrane pass occupies residues 4 to 24; it reads AIWILLIVLALIGGLFGGVFI.

The protein belongs to the UPF0154 family.

Its subcellular location is the cell membrane. The protein is UPF0154 protein SUB0399 of Streptococcus uberis (strain ATCC BAA-854 / 0140J).